A 24-amino-acid polypeptide reads, in one-letter code: Tryptophanase operon leader peptide (24 aa).

The protein is Tryptophanase operon leader peptide (tnaL) of Escherichia coli O157:H7.